Reading from the N-terminus, the 327-residue chain is Phenylalanine--tRNA ligase alpha subunit (327 aa).

E252 lines the Mg(2+) pocket.

The protein belongs to the class-II aminoacyl-tRNA synthetase family. Phe-tRNA synthetase alpha subunit type 1 subfamily. As to quaternary structure, tetramer of two alpha and two beta subunits. Mg(2+) serves as cofactor.

The protein resides in the cytoplasm. It catalyses the reaction tRNA(Phe) + L-phenylalanine + ATP = L-phenylalanyl-tRNA(Phe) + AMP + diphosphate + H(+). The chain is Phenylalanine--tRNA ligase alpha subunit from Aeromonas salmonicida (strain A449).